The primary structure comprises 478 residues: ATP synthase subunit beta (478 aa).

ATP is bound at residue 164–171; the sequence is GGAGVGKT.

Belongs to the ATPase alpha/beta chains family. As to quaternary structure, F-type ATPases have 2 components, CF(1) - the catalytic core - and CF(0) - the membrane proton channel. CF(1) has five subunits: alpha(3), beta(3), gamma(1), delta(1), epsilon(1). CF(0) has three main subunits: a(1), b(2) and c(9-12). The alpha and beta chains form an alternating ring which encloses part of the gamma chain. CF(1) is attached to CF(0) by a central stalk formed by the gamma and epsilon chains, while a peripheral stalk is formed by the delta and b chains.

Its subcellular location is the cell membrane. The enzyme catalyses ATP + H2O + 4 H(+)(in) = ADP + phosphate + 5 H(+)(out). Produces ATP from ADP in the presence of a proton gradient across the membrane. The catalytic sites are hosted primarily by the beta subunits. The protein is ATP synthase subunit beta of Streptomyces avermitilis (strain ATCC 31267 / DSM 46492 / JCM 5070 / NBRC 14893 / NCIMB 12804 / NRRL 8165 / MA-4680).